A 559-amino-acid chain; its full sequence is Arginine--tRNA ligase (559 aa).

The short motif at 116–126 (ANPNGPLHVGH) is the 'HIGH' region element.

This sequence belongs to the class-I aminoacyl-tRNA synthetase family.

It is found in the cytoplasm. It catalyses the reaction tRNA(Arg) + L-arginine + ATP = L-arginyl-tRNA(Arg) + AMP + diphosphate. This chain is Arginine--tRNA ligase, found in Methanosphaerula palustris (strain ATCC BAA-1556 / DSM 19958 / E1-9c).